The primary structure comprises 379 residues: Very late expression factor 1 (379 aa).

Residues 169–348 (VIDTILNFIN…YNIGLDETSS (180 aa)) form the Tyr recombinase domain. Catalysis depends on residues Arg-210, Lys-239, Arg-303, and His-326. Catalysis depends on Tyr-335, which acts as the O-(3'-phospho-DNA)-tyrosine intermediate. Acidic residues predominate over residues 346-358 (TSSEEENNNDDDD). The interval 346 to 379 (TSSEEENNNDDDDAQHNRNSSGSSGESLLYYRNE) is disordered. Positions 362 to 379 (NRNSSGSSGESLLYYRNE) are enriched in low complexity.

The protein belongs to the 'phage' integrase family.

Its function is as follows. Plays a role in nucleocapsid assembly and serves an essential function during the final stages of the DNA packaging process. Participates in the processing of branched DNA molecules at the late stages of viral genome replication. In Lepidoptera (butterflies and moths), this protein is Very late expression factor 1 (VLF-1).